Consider the following 90-residue polypeptide: RING finger protein Z (90 aa).

A lipid anchor (N-myristoyl glycine; by host) is attached at Gly-2. An RING-type; atypical zinc finger spans residues 32 to 68 (CKSCWQKFDSLVRCHDHYLCRHCLNLLLSVSDRCPLC). A PPXY motif motif is present at residues 85-88 (PPPY).

This sequence belongs to the arenaviridae Z protein family. Interacts with protein NP; this interaction probably directs the encapsidated genome to budding sites. Interacts (via RING-type zinc finger) with polymerase L; this interaction inhibits viral transcription and replication, Z partially blocks the product exit tunnel for the releasing nascent RNA product. Interacts with the glycoprotein complex; this interaction plays a role in virion budding. Interacts (via RING-type zinc finger) with host EIF4E; this interaction results in conformational changes of both interacting proteins and reduces EIF4E affinity for its substrate, the 5'-m7 G cap structure. Interacts (via late-budding domain) with host TSG101; this interaction is essential for budding and release of viral particles. Interacts with host RPLP0; this interaction may serve to load ribosome-like particles inside the virion. Interacts with host PML; this interaction induces PML bodies redistribution in the cytoplasm upon viral infection. Myristoylation is required for the role of RING finger protein Z in assembly and budding.

It is found in the virion. It localises to the host cytoplasm. The protein resides in the host perinuclear region. The protein localises to the host cell membrane. In terms of biological role, plays a crucial role in virion assembly and budding. Expressed late in the virus life cycle, it acts as an inhibitor of viral transcription and RNA synthesis by interacting with the viral polymerase L. Presumably recruits the NP encapsidated genome to cellular membranes at budding sites via direct interaction with NP. Plays critical roles in the final steps of viral release by interacting with host TSG101, a member of the vacuolar protein-sorting pathway and using other cellular host proteins involved in vesicle formation pathway. The budding of the virus progeny occurs after association of protein Z with the viral glycoprotein complex SSP-GP1-GP2 at the cell periphery, step that requires myristoylation of protein Z. Also selectively represses protein production by associating with host EIF4E. In cell-based minigenome assay, has an inhibitory effect on the ribonucleoprotein machinery (vRNP), which is responsible for the replication and transcription of the viral genome. The sequence is that of RING finger protein Z from Homo sapiens (Human).